Reading from the N-terminus, the 315-residue chain is Porphobilinogen deaminase (315 aa).

Cysteine 251 is subject to S-(dipyrrolylmethanemethyl)cysteine.

This sequence belongs to the HMBS family. As to quaternary structure, monomer. Requires dipyrromethane as cofactor.

It carries out the reaction 4 porphobilinogen + H2O = hydroxymethylbilane + 4 NH4(+). The protein operates within porphyrin-containing compound metabolism; protoporphyrin-IX biosynthesis; coproporphyrinogen-III from 5-aminolevulinate: step 2/4. Its function is as follows. Tetrapolymerization of the monopyrrole PBG into the hydroxymethylbilane pre-uroporphyrinogen in several discrete steps. This Sphingopyxis alaskensis (strain DSM 13593 / LMG 18877 / RB2256) (Sphingomonas alaskensis) protein is Porphobilinogen deaminase.